A 56-amino-acid polypeptide reads, in one-letter code: Large ribosomal subunit protein bL32c (56 aa).

Belongs to the bacterial ribosomal protein bL32 family.

The protein localises to the plastid. The protein resides in the chloroplast. The protein is Large ribosomal subunit protein bL32c of Tupiella akineta (Green alga).